We begin with the raw amino-acid sequence, 88 residues long: Platelet factor 4 (88 aa).

O-linked (GalNAc...) threonine glycosylation occurs at T7. Intrachain disulfides connect C25/C51 and C27/C67. Position 41 is a phosphoserine (S41). Residue 76–82 participates in heparin binding; sequence KKILKKL.

This sequence belongs to the intercrine alpha (chemokine CxC) family. In terms of assembly, homotetramer. Interacts with TNFAIP6 (via Link domain). Interacts with CCR1. Interacts with CXCR3. Interacts with THBD; this interaction enhances generation of activated protein C. O-linked glycan consists of Gal-GalNAc disaccharide which is modified with sialic acid residues (microheterogeneity).

Its subcellular location is the secreted. Functionally, chemokine released during platelet aggregation that plays a role in different biological processes including hematopoiesis, cell proliferation, differentiation, and activation. Acts via different functional receptors including CCR1, CXCR3A or CXCR3B. Upon interaction with CXCR3A receptor, induces activated T-lymphocytes migration mediated via downstream Ras/extracellular signal-regulated kinase (ERK) signaling. Neutralizes the anticoagulant effect of heparin by binding more strongly to heparin than to the chondroitin-4-sulfate chains of the carrier molecule. Plays a role in the inhibition of hematopoiesis and in the maintenance of hematopoietic stem cell (HSC) quiescence. Chemotactic for neutrophils and monocytes via CCR1. Inhibits endothelial cell proliferation. In cooperation with toll-like receptor 8/TLR8, induces chromatin remodeling and activates inflammatory gene expression via the TBK1-IRF5 axis. In addition, induces myofibroblast differentiation and collagen synthesis in different precursor cells, including endothelial cells, by stimulating endothelial-to-mesenchymal transition. Interacts with thrombomodulin/THBD to enhance the activation of protein C and thus potentiates its anticoagulant activity. The sequence is that of Platelet factor 4 (PF4) from Bos taurus (Bovine).